Consider the following 377-residue polypeptide: Glutamate 5-kinase (377 aa).

Residue lysine 22 participates in ATP binding. Residues serine 62, aspartate 149, and asparagine 161 each coordinate substrate. ATP is bound by residues 181 to 182 and 223 to 229; these read TD and TGGMVTK. A PUA domain is found at 285–363; the sequence is RGVLVADSGA…AQLRRLLGEE (79 aa).

It belongs to the glutamate 5-kinase family.

It is found in the cytoplasm. The enzyme catalyses L-glutamate + ATP = L-glutamyl 5-phosphate + ADP. Its pathway is amino-acid biosynthesis; L-proline biosynthesis; L-glutamate 5-semialdehyde from L-glutamate: step 1/2. Catalyzes the transfer of a phosphate group to glutamate to form L-glutamate 5-phosphate. The chain is Glutamate 5-kinase from Bifidobacterium animalis subsp. lactis (strain AD011).